A 431-amino-acid chain; its full sequence is Gamma-glutamyl phosphate reductase (431 aa).

The protein belongs to the gamma-glutamyl phosphate reductase family.

The protein localises to the cytoplasm. The enzyme catalyses L-glutamate 5-semialdehyde + phosphate + NADP(+) = L-glutamyl 5-phosphate + NADPH + H(+). It functions in the pathway amino-acid biosynthesis; L-proline biosynthesis; L-glutamate 5-semialdehyde from L-glutamate: step 2/2. In terms of biological role, catalyzes the NADPH-dependent reduction of L-glutamate 5-phosphate into L-glutamate 5-semialdehyde and phosphate. The product spontaneously undergoes cyclization to form 1-pyrroline-5-carboxylate. The chain is Gamma-glutamyl phosphate reductase from Methylobacterium sp. (strain 4-46).